A 460-amino-acid chain; its full sequence is ATP synthase subunit beta (460 aa).

Position 150-157 (150-157) interacts with ATP; that stretch reads GGAGVGKT.

It belongs to the ATPase alpha/beta chains family. F-type ATPases have 2 components, CF(1) - the catalytic core - and CF(0) - the membrane proton channel. CF(1) has five subunits: alpha(3), beta(3), gamma(1), delta(1), epsilon(1). CF(0) has three main subunits: a(1), b(2) and c(9-12). The alpha and beta chains form an alternating ring which encloses part of the gamma chain. CF(1) is attached to CF(0) by a central stalk formed by the gamma and epsilon chains, while a peripheral stalk is formed by the delta and b chains.

The protein localises to the cell inner membrane. It carries out the reaction ATP + H2O + 4 H(+)(in) = ADP + phosphate + 5 H(+)(out). Produces ATP from ADP in the presence of a proton gradient across the membrane. The catalytic sites are hosted primarily by the beta subunits. The chain is ATP synthase subunit beta from Photorhabdus laumondii subsp. laumondii (strain DSM 15139 / CIP 105565 / TT01) (Photorhabdus luminescens subsp. laumondii).